A 193-amino-acid polypeptide reads, in one-letter code: MKEIQIPRKSFARSSELGAKRLKDPEMKNRKVTTEKRQIATFSDVSFESTKDPMDFSPISQISGAISDSEAESVIQGSSLDLMSTPEICLPADDSPVSTITSVEARIDTSSTDRIQSIVDLPASVQSLRGEINELKKLICSVDNSAEINWVDRVVTVKFRIVLLSFILWAILAAIVVFFSSGEERAYRGPLPT.

Positions 15–35 (SELGAKRLKDPEMKNRKVTTE) are disordered. Basic and acidic residues predominate over residues 18–35 (GAKRLKDPEMKNRKVTTE). The 39-residue stretch at 155–193 (VTVKFRIVLLSFILWAILAAIVVFFSSGEERAYRGPLPT) folds into the KASH domain. A helical transmembrane segment spans residues 161 to 181 (IVLLSFILWAILAAIVVFFSS). Positions 190-193 (PLPT) match the Required for nuclear localization motif.

In terms of assembly, interacts with SUN1 and SUN2.

The protein localises to the nucleus membrane. This is Protein SINE3 from Arabidopsis thaliana (Mouse-ear cress).